A 153-amino-acid polypeptide reads, in one-letter code: Superoxide dismutase [Cu-Zn] (153 aa).

Cu cation contacts are provided by histidine 46, histidine 48, and histidine 63. The cysteines at positions 57 and 146 are disulfide-linked. The segment at 61 to 80 (GPHFNPFGKEHGAPEDENRH) is disordered. Residues histidine 63, histidine 71, histidine 80, and aspartate 83 each coordinate Zn(2+). Residues 68–80 (GKEHGAPEDENRH) are compositionally biased toward basic and acidic residues. Histidine 120 lines the Cu cation pocket. The segment covering 124–136 (DDLGRSEHPESKK) has biased composition (basic and acidic residues). Positions 124–143 (DDLGRSEHPESKKTGNAGAR) are disordered. Arginine 143 lines the substrate pocket.

The protein belongs to the Cu-Zn superoxide dismutase family. As to quaternary structure, homodimer. The cofactor is Cu cation. It depends on Zn(2+) as a cofactor.

Its subcellular location is the cytoplasm. The enzyme catalyses 2 superoxide + 2 H(+) = H2O2 + O2. Functionally, destroys radicals which are normally produced within the cells and which are toxic to biological systems. The protein is Superoxide dismutase [Cu-Zn] (sodC) of Aspergillus flavus.